The primary structure comprises 194 residues: MKKGEKLEIKLFGKWDSTSVTVKDPSLKSHISLNPVLIPHTAGRNSKKMFDKNKMHVVERLANKLMATQVNTGKKNEVLSIIEEALTIVENRTKENPIQVVVDALENSGPREETTRISYGGIAFLQSVDVSPSRRLDTAFRNISLGASQGAHKSKKSIAQCLADELVAASKADMQKSFAVKKKEEKERVAQSAR.

It belongs to the universal ribosomal protein uS7 family. In terms of assembly, part of the 30S ribosomal subunit.

In terms of biological role, one of the primary rRNA binding proteins, it binds directly to 16S rRNA where it nucleates assembly of the head domain of the 30S subunit. Is located at the subunit interface close to the decoding center. The sequence is that of Small ribosomal subunit protein uS7 from Methanococcus vannielii (strain ATCC 35089 / DSM 1224 / JCM 13029 / OCM 148 / SB).